The sequence spans 261 residues: Small ribosomal subunit protein uS3 (261 aa).

The KH type-2 domain occupies 39–107 (VREYLKRKLA…PVHVSIEEIR (69 aa)). The segment at 213 to 261 (QPVAEEPAADDRRPRRTPGRPDGDKPRTRTVKKVDGAADPAKRVRKAGA) is disordered. The span at 221–254 (ADDRRPRRTPGRPDGDKPRTRTVKKVDGAADPAK) shows a compositional bias: basic and acidic residues.

Belongs to the universal ribosomal protein uS3 family. In terms of assembly, part of the 30S ribosomal subunit. Forms a tight complex with proteins S10 and S14.

Binds the lower part of the 30S subunit head. Binds mRNA in the 70S ribosome, positioning it for translation. The protein is Small ribosomal subunit protein uS3 of Dechloromonas aromatica (strain RCB).